Consider the following 315-residue polypeptide: N-acetylneuraminate lyase (315 aa).

Aceneuramate is bound by residues Ser-59 and Ser-60. Tyr-149 (proton donor) is an active-site residue. The Schiff-base intermediate with substrate role is filled by Lys-177. Aceneuramate-binding residues include Ser-179, Gly-202, Asp-204, Glu-205, and Gly-221.

Belongs to the DapA family. NanA subfamily. In terms of assembly, homotetramer.

It is found in the cytoplasm. It catalyses the reaction aceneuramate = aldehydo-N-acetyl-D-mannosamine + pyruvate. The protein operates within amino-sugar metabolism; N-acetylneuraminate degradation; D-fructose 6-phosphate from N-acetylneuraminate: step 1/5. In terms of biological role, catalyzes the reversible aldol cleavage of N-acetylneuraminic acid (sialic acid; Neu5Ac) to form pyruvate and N-acetylmannosamine (ManNAc) via a Schiff base intermediate. Cannot use 2,7-anhydro-Neu5Ac. Involved in the degradation of sialic acid, which is present in the host mucus layer and represents a much-coveted source of nutrients for R.gnavus, a prevalent member of the normal gut microbiota. The chain is N-acetylneuraminate lyase from Mediterraneibacter gnavus (strain ATCC 29149 / DSM 114966 / JCM 6515 / VPI C7-9) (Ruminococcus gnavus).